Reading from the N-terminus, the 675-residue chain is UvrABC system protein B (675 aa).

A Helicase ATP-binding domain is found at 30 to 417; the sequence is SGIEQGNRNQ…SDQIVEQVVR (388 aa). 43 to 50 contacts ATP; it reads GVTGSGKT. The Beta-hairpin signature appears at 96–119; it reads YYDYYQPEAYVPSSDTFIEKDAAI. The 168-residue stretch at 434–601 folds into the Helicase C-terminal domain; sequence QVDDVLSEIN…AVRQKVKEID (168 aa). The 36-residue stretch at 637–672 folds into the UVR domain; sequence AKHMSKLEKEMLKASKELQFEQAARLRDEILRLKAQ.

Belongs to the UvrB family. As to quaternary structure, forms a heterotetramer with UvrA during the search for lesions. Interacts with UvrC in an incision complex.

The protein resides in the cytoplasm. The UvrABC repair system catalyzes the recognition and processing of DNA lesions. A damage recognition complex composed of 2 UvrA and 2 UvrB subunits scans DNA for abnormalities. Upon binding of the UvrA(2)B(2) complex to a putative damaged site, the DNA wraps around one UvrB monomer. DNA wrap is dependent on ATP binding by UvrB and probably causes local melting of the DNA helix, facilitating insertion of UvrB beta-hairpin between the DNA strands. Then UvrB probes one DNA strand for the presence of a lesion. If a lesion is found the UvrA subunits dissociate and the UvrB-DNA preincision complex is formed. This complex is subsequently bound by UvrC and the second UvrB is released. If no lesion is found, the DNA wraps around the other UvrB subunit that will check the other stand for damage. This chain is UvrABC system protein B, found in Acinetobacter baylyi (strain ATCC 33305 / BD413 / ADP1).